The following is a 102-amino-acid chain: Thioredoxin (102 aa).

One can recognise a Thioredoxin domain in the interval 1 to 102; sequence MVQVVSQENF…SLIKLISKHQ (102 aa). A disulfide bridge connects residues C28 and C31.

Belongs to the thioredoxin family.

Its function is as follows. Participates in various redox reactions through the reversible oxidation of its active center dithiol to a disulfide and catalyzes dithiol-disulfide exchange reactions. The chain is Thioredoxin (trxA) from Chlamydia trachomatis serovar D (strain ATCC VR-885 / DSM 19411 / UW-3/Cx).